The following is a 122-amino-acid chain: Large ribosomal subunit protein uL14 (122 aa).

The protein belongs to the universal ribosomal protein uL14 family. Part of the 50S ribosomal subunit. Forms a cluster with proteins L3 and L19. In the 70S ribosome, L14 and L19 interact and together make contacts with the 16S rRNA in bridges B5 and B8.

Binds to 23S rRNA. Forms part of two intersubunit bridges in the 70S ribosome. This is Large ribosomal subunit protein uL14 from Desulfatibacillum aliphaticivorans.